Consider the following 520-residue polypeptide: GMP synthase [glutamine-hydrolyzing] (520 aa).

One can recognise a Glutamine amidotransferase type-1 domain in the interval 12 to 202 (KIIVLDFGSQ…AFDVCGCTGD (191 aa)). Cysteine 89 (nucleophile) is an active-site residue. Active-site residues include histidine 176 and glutamate 178. The GMPS ATP-PPase domain occupies 203-395 (WSMENFIDME…LGMPDAIVWR (193 aa)). 230–236 (SGGVDSS) contributes to the ATP binding site.

In terms of assembly, homodimer.

It catalyses the reaction XMP + L-glutamine + ATP + H2O = GMP + L-glutamate + AMP + diphosphate + 2 H(+). Its pathway is purine metabolism; GMP biosynthesis; GMP from XMP (L-Gln route): step 1/1. Catalyzes the synthesis of GMP from XMP. The polypeptide is GMP synthase [glutamine-hydrolyzing] (Enterococcus faecalis (strain ATCC 700802 / V583)).